Here is a 509-residue protein sequence, read N- to C-terminus: 2-succinyl-5-enolpyruvyl-6-hydroxy-3-cyclohexene-1-carboxylate synthase (509 aa).

It belongs to the TPP enzyme family. MenD subfamily. Homodimer. Requires Mg(2+) as cofactor. Mn(2+) serves as cofactor. Thiamine diphosphate is required as a cofactor.

It catalyses the reaction isochorismate + 2-oxoglutarate + H(+) = 5-enolpyruvoyl-6-hydroxy-2-succinyl-cyclohex-3-ene-1-carboxylate + CO2. The protein operates within quinol/quinone metabolism; 1,4-dihydroxy-2-naphthoate biosynthesis; 1,4-dihydroxy-2-naphthoate from chorismate: step 2/7. Its pathway is quinol/quinone metabolism; menaquinone biosynthesis. Functionally, catalyzes the thiamine diphosphate-dependent decarboxylation of 2-oxoglutarate and the subsequent addition of the resulting succinic semialdehyde-thiamine pyrophosphate anion to isochorismate to yield 2-succinyl-5-enolpyruvyl-6-hydroxy-3-cyclohexene-1-carboxylate (SEPHCHC). The chain is 2-succinyl-5-enolpyruvyl-6-hydroxy-3-cyclohexene-1-carboxylate synthase from Corynebacterium diphtheriae (strain ATCC 700971 / NCTC 13129 / Biotype gravis).